The following is a 71-amino-acid chain: U3-scytotoxin-Sth1h (71 aa).

Residues Met1–Ala33 form the signal peptide. A propeptide spanning residues Glu34 to Arg39 is cleaved from the precursor. 3 disulfides stabilise this stretch: Cys46/Cys60, Cys53/Cys64, and Cys59/Cys69.

As to expression, expressed by the venom gland.

Its subcellular location is the secreted. Probable insect neurotoxin with ion channel impairing activity. Does not show activity on 45 human receptors from 9 families (5-hydroxytryptamine, adrenergic, dopamine, muscarinic, histamine, neurotransmitter, opioid, sigma, and gaba(A) receptors). In vivo, when mixed with U3-SYTX-Sth1a does not cause paralytic or lethal activity when injected into crickets. It is noteworthy that crickets are evolutionarily distant from prey species. This chain is U3-scytotoxin-Sth1h, found in Scytodes thoracica (Spitting spider).